The following is a 151-amino-acid chain: Protein InSETG-4 (151 aa).

The protein localises to the cytoplasm. The protein resides in the cytosol. This Homo sapiens (Human) protein is Protein InSETG-4 (InSet4-G).